The sequence spans 845 residues: MSFTDQTYTRSCMHTCITRDHRLYGIVIISLLLLLDNSVFCQNENKVIDIKKDEKIWPYRICSGMSQATDIVRFGRNIQCPEYSPKDEGTEGILLIYKQNIVPYIFPVRIYYKELTIRYRYADVFSYYDMGDVTKKIPIMETEKTLIDMDGKCYSAARYVEGGAYMDAYDGDEHNHTVPFMLGYQNPDGGVTRYVTVDTHRPCLPGTWLRKTCTTVNCIVTDTYAKSRYPYDFFAISTGEIVDGSPFYTGDNDKKFSETYTKFKVYNEYERLEELTVSSTKKRTFDKIAFLEKRDYSISWEVKEEDQAPCQYVLWKASTQALMTKTVNNTYHFTSRELTATFGANDKEELKLAEKYPCVYEDAKETFEKMFSQNLKDTHVLNNDAKNNYSYVSHGGLILIFKPVKNKEIVQLMNITHLLNNTHANMTKHRRKRETSSSASSKGIYDLYGDLNVAQVQFAFNTLKSYINQALMSIADAWCRDQKRTNEIWGIISKINPSAALSAIFDKPVSARYLGDVISVSKCINVNQDSVRIYQTLKVPKTGEEWGDRMQCYSRPLVTFRLDNETASTIRTGQLGVDNEILLGNYRTELCQENSIRYFVAGAQIHVFQDYDFYHTIKLSDVDIVDTFVHLNISFLQNIDFQMLRLYTQEEQYASRLLDLETLLRDFNTYRQRIYKLEQAIVTKPYVPPAGMQQALQGLSGVGSVITGTLGAMQSLVSGVASFLQNPFGGTLSIILIGCIIVGVIIIYNRMNQSRGSPIDYYFPYVNQTLPQRQLQQHVGDPPSYDESIGSSHTYSKEDALLMLKAMKELDKSEKEAQIEATKSQPSIIDRIRRRGYTTLSSMNI.

A signal peptide spans 1-41 (MSFTDQTYTRSCMHTCITRDHRLYGIVIISLLLLLDNSVFC). The Virion surface segment spans residues 42–727 (QNENKVIDIK…SGVASFLQNP (686 aa)). Disulfide bonds link C62–C523, C80–C479, C153–C218, C310–C358, and C552–C591. The segment at 120-126 (RYADVFS) is involved in fusion and/or binding to host membrane. N-linked (GlcNAc...) asparagine; by host glycosylation is present at N175. Positions 204-212 (LPGTWLRKT) are involved in fusion and/or binding to host membrane. 7 N-linked (GlcNAc...) asparagine; by host glycosylation sites follow: N328, N388, N414, N420, N425, N564, and N632. The hydrophobic membrane proximal region stretch occupies residues 677 to 725 (LEQAIVTKPYVPPAGMQQALQGLSGVGSVITGTLGAMQSLVSGVASFLQ). Residues 728–748 (FGGTLSIILIGCIIVGVIIIY) form a helical membrane-spanning segment. Residues 749–845 (NRMNQSRGSP…GYTTLSSMNI (97 aa)) lie on the Intravirion side of the membrane. The short motif at 837-840 (YTTL) is the Internalization motif element.

The protein belongs to the herpesviridae glycoprotein B family. As to quaternary structure, homotrimer; disulfide-linked. Binds to heparan sulfate proteoglycans. Interacts with gH/gL heterodimer. In terms of processing, a proteolytic cleavage by host furin generates two subunits that remain linked by disulfide bonds.

The protein resides in the virion membrane. Its subcellular location is the host cell membrane. It localises to the host endosome membrane. The protein localises to the host Golgi apparatus membrane. Its function is as follows. Envelope glycoprotein that forms spikes at the surface of virion envelope. Essential for the initial attachment to heparan sulfate moieties of the host cell surface proteoglycans. Involved in fusion of viral and cellular membranes leading to virus entry into the host cell. Following initial binding to its host receptors, membrane fusion is mediated by the fusion machinery composed at least of gB and the heterodimer gH/gL. May be involved in the fusion between the virion envelope and the outer nuclear membrane during virion egress. This is Envelope glycoprotein B from Elephas maximus (Indian elephant).